The primary structure comprises 4065 residues: Polyketide synthase-nonribosomal peptide synthetase pyiS (4065 aa).

The Ketosynthase family 3 (KS3) domain occupies 6–440 (SEPVAIIGTG…GANCHAILEA (435 aa)). Catalysis depends on for beta-ketoacyl synthase activity residues C179, H314, and H360. Residues 552 to 875 (IFTGQGAQWP…PYTGVLSRGK (324 aa)) form an acyl transferase region. Positions 950 to 1087 (NELLGRQILD…CDVLVTYGDS (138 aa)) are N-terminal hotdog fold. In terms of domain architecture, PKS/mFAS DH spans 950–1260 (NELLGRQILD…TQPLFNPTEA (311 aa)). The dehydratase (DH) domain stretch occupies residues 951–1254 (ELLGRQILDG…QVEGLQTQPL (304 aa)). H982 serves as the catalytic Proton acceptor; for dehydratase activity. Positions 1102–1260 (EYFMLGVESD…TQPLFNPTEA (159 aa)) are C-terminal hotdog fold. The active-site Proton donor; for dehydratase activity is the D1166. The methyltransferase (MT) domain stretch occupies residues 1409–1593 (AHGMPRYTKY…KQTGFSGIDT (185 aa)). The tract at residues 2129–2302 (TYWLVGLSGT…NASVVHIGAI (174 aa)) is ketoreductase (KR)domain. The Carrier 1 domain maps to 2411 to 2492 (INSAEVYEII…EILETAQQLL (82 aa)). Position 2452 is an O-(pantetheine 4'-phosphoryl)serine (S2452). Positions 2497–2561 (LPKMDPNDKS…GAKKGETVSK (65 aa)) are disordered. Residues 2551–2561 (SGAKKGETVSK) are compositionally biased toward basic and acidic residues. The tract at residues 2645-3076 (SKKTPISFAQ…FSRNQALRLA (432 aa)) is condensation. Residues 3112 to 3516 (DIAKQKSHSL…RLLLEGRIAD (405 aa)) form an adenylation region. One can recognise a Carrier 2 domain in the interval 3634 to 3714 (QDLNDTESRL…DMAALVDELS (81 aa)). An O-(pantetheine 4'-phosphoryl)serine modification is found at S3674. Residues 3760–3975 (LTGSTGFLGR…LDFISVDEAA (216 aa)) are reductase-like.

Belongs to the NRP synthetase family.

It participates in mycotoxin biosynthesis. Its function is as follows. Hybrid PKS-NRPS synthetase; part of the gene cluster that mediates the biosynthesis of the mycotoxin pyrichalasin H, a tyrosine-derived cytochalasan that inhibits the growth of rice seedlings, but also inhibits lymphocyte capping and actin polymerization and alters cell morphology. Pyrichalasin H is indicated as the responsible agent for the genus-specific pathogenicity of M.grisea toward crabgrass. The first step in the pathway is catalyzed by the O-methyltransferase pyiA which methylates free tyrosine to generate the precursor O-methyltyrosine. The hybrid PKS-NRPS pyiS, assisted by the enoyl reductase pyiC, are responsible for fusion of the O-methyltyrosine precursor and the polyketide backbone. The polyketide synthase module (PKS) of pyiS is responsible for the synthesis of the polyketide backbone and the downstream nonribosomal peptide synthetase (NRPS) amidates the carboxyl end of the polyketide with the O-methyltyrosine precursor. As the NRPS A-domain demonstrates substrate tolerance, pyiS can also use phenylalanine, tyrosine and even para-chlorophenylalanine as amino acid precursor, which leads to the production of novel cytochalasans, including halogenated cytochalasans. Because pyiS lacks a designated enoylreductase (ER) domain, the required activity is provided the enoyl reductase pyiC. Reduction by the hydrolyase pyiE leads to 1,5-dihydropyrrolone, which is substrate for dehydration and intra-molecular Diels-Alder cyclization by the Diels-Alderase pyiF to yield the required isoindolone-fused macrocycle. The tailoring cytochrome P450 monooxygenases piyD and piyG catalyze the hydroxylation at C-18 and C-7, respectivily, whereas the short-chain dehydrogenase/reductase pyiH reduces the carbonyl at C-21 in preparation for the transfer of an acetyl group by the acetyltransferase pyiB. These 3 reactions whose order is not clear yet, lead to the production of O-methylpyrichalasin J, a deacetylated pyrichalasin H. Finally, pyiB to converts O-methylpyrichalasin J into the final product pyrichalasin H via acetylation of C-21. This is Polyketide synthase-nonribosomal peptide synthetase pyiS from Pyricularia grisea (Crabgrass-specific blast fungus).